The primary structure comprises 601 residues: 1-deoxy-D-xylulose-5-phosphate synthase (601 aa).

Thiamine diphosphate-binding positions include His63 and 104-106 (GHS). Position 135 (Asp135) interacts with Mg(2+). Residues 136-137 (GS), Asn164, Tyr272, and Glu353 contribute to the thiamine diphosphate site. A Mg(2+)-binding site is contributed by Asn164.

The protein belongs to the transketolase family. DXPS subfamily. Homodimer. Requires Mg(2+) as cofactor. Thiamine diphosphate is required as a cofactor.

The catalysed reaction is D-glyceraldehyde 3-phosphate + pyruvate + H(+) = 1-deoxy-D-xylulose 5-phosphate + CO2. The protein operates within metabolic intermediate biosynthesis; 1-deoxy-D-xylulose 5-phosphate biosynthesis; 1-deoxy-D-xylulose 5-phosphate from D-glyceraldehyde 3-phosphate and pyruvate: step 1/1. Functionally, catalyzes the acyloin condensation reaction between C atoms 2 and 3 of pyruvate and glyceraldehyde 3-phosphate to yield 1-deoxy-D-xylulose-5-phosphate (DXP). The protein is 1-deoxy-D-xylulose-5-phosphate synthase of Aliarcobacter butzleri (strain RM4018) (Arcobacter butzleri).